The primary structure comprises 302 residues: Acetyl-coenzyme A carboxylase carboxyl transferase subunit beta (302 aa).

A CoA carboxyltransferase N-terminal domain is found at Val25–Ala294. Positions 29, 32, 48, and 51 each coordinate Zn(2+). A C4-type zinc finger spans residues Cys29–Cys51.

The protein belongs to the AccD/PCCB family. Acetyl-CoA carboxylase is a heterohexamer composed of biotin carboxyl carrier protein (AccB), biotin carboxylase (AccC) and two subunits each of ACCase subunit alpha (AccA) and ACCase subunit beta (AccD). It depends on Zn(2+) as a cofactor.

It localises to the cytoplasm. It catalyses the reaction N(6)-carboxybiotinyl-L-lysyl-[protein] + acetyl-CoA = N(6)-biotinyl-L-lysyl-[protein] + malonyl-CoA. It functions in the pathway lipid metabolism; malonyl-CoA biosynthesis; malonyl-CoA from acetyl-CoA: step 1/1. In terms of biological role, component of the acetyl coenzyme A carboxylase (ACC) complex. Biotin carboxylase (BC) catalyzes the carboxylation of biotin on its carrier protein (BCCP) and then the CO(2) group is transferred by the transcarboxylase to acetyl-CoA to form malonyl-CoA. The sequence is that of Acetyl-coenzyme A carboxylase carboxyl transferase subunit beta from Erwinia tasmaniensis (strain DSM 17950 / CFBP 7177 / CIP 109463 / NCPPB 4357 / Et1/99).